The primary structure comprises 388 residues: Nocturnin (388 aa).

Glu-152 contributes to the Mg(2+) binding site. Substrate-binding positions include Glu-152, 176-178, Asn-220, 243-246, 281-283, and His-371; these read KPW, HLKA, and DFN.

This sequence belongs to the CCR4/nocturin family. Requires Mg(2+) as cofactor. As to expression, expressed only in the photoreceptors of the retina. Expression is controlled by the retinal circadian clock.

The protein localises to the cytoplasm. Its subcellular location is the nucleus. It is found in the perinuclear region. It localises to the mitochondrion. The catalysed reaction is NADP(+) + H2O = phosphate + NAD(+). It carries out the reaction NADPH + H2O = phosphate + NADH. Phosphatase which catalyzes the conversion of NADP(+) to NAD(+) and of NADPH to NADH. Shows a small preference for NADPH over NADP(+). Component of the circadian clock or downstream effector of clock function. Exhibits a high amplitude circadian rhythm with maximal levels in early evening. In constant darkness or constant light, the amplitude of the rhythm decreases. In Xenopus laevis (African clawed frog), this protein is Nocturnin.